We begin with the raw amino-acid sequence, 517 residues long: Dermokine (517 aa).

An N-terminal signal peptide occupies residues 1–21 (MKLQGSLACLLLALCLGGGAA). 2 disordered regions span residues 51–83 (VGQGAKEAASSGIQNALGQGHGEEGGSTLMGSR) and 123–364 (AGSW…IQKE). Composition is skewed to gly residues over residues 127–145 (GTSGGHGAYGSQGGAGVQG) and 167–176 (GSVGQGGNGG). Residues 197–206 (RGNNQNSGCT) are compositionally biased toward polar residues. Over residues 212-235 (GSHESFSNSGGSSNDGSRGSQGSH) the composition is skewed to low complexity. Gly residues predominate over residues 236–250 (GSNGQGSSGRGGGQG). The span at 251-289 (NSDNNGSSSSSSGSNSGNSNSGNSGNSNSGNSGNSGSGS) shows a compositional bias: low complexity. Composition is skewed to gly residues over residues 308–332 (GSRGGSGGSGGSGGSGGSGGSGGGN) and 347–358 (GGSGSQGHGSNG).

Belongs to the dermokine family. As to quaternary structure, homooligomer. Seems to be able to homodimerize and homotrimerize. O-glycosylated. In terms of tissue distribution, highly expressed in stratified epithelia; such as the skin, tongue, esophagus, forestomach and vagina. Also found in lung, trachea and urinary bladder.

It localises to the secreted. May act as a soluble regulator of keratinocyte differentiation. This Mus musculus (Mouse) protein is Dermokine (Dmkn).